The following is a 508-amino-acid chain: METPNIISHTNLLSKIDLEKQNPAPIFPTITELKSEARSLFSLAFPTILAALILYARSAISMLFLGHIGELELAGGSLAIAFANITGYSVLAGLALGMDPLCSQAFGAGRPKLLSLTLQRTVLFLLTSSVVIVALWLNLGKIMIYLHQDPSISSLAQTYILCSIPDLLTNSFLHPLRIYLRAQGITSPLTLATLAGTIFHIPMNFFLVSYLGWGFMGVSMAAAASNLLVVIFLVAHVWIAGLHQPTWTRPSSECFKDWGPVVTLAIPSCIGVCLEWWWYEIMTVLCGLLIDPSTPVASMGILIQTTSLLYIFPSSLGLAVSTRVGNELGSNRPNKARLSAIVAVSFAGVMGLTASAFAWGVSDVWGWIFTNDVAIIKLTAAALPILGLCELGNCPQTVGCGVVRGTARPSMAANINLGAFYLVGTPVAVGLTFWAAYGFCGLWVGLLAAQICCAAMMLYVVATTDWEKEAIRARKLTCTEGVDVVITTTQTNGDLSEPLIYVVTVATD.

The next 12 helical transmembrane spans lie at 48–68 (ILAALILYARSAISMLFLGHI), 78–98 (LAIAFANITGYSVLAGLALGM), 122–142 (VLFLLTSSVVIVALWLNLGKI), 156–176 (AQTYILCSIPDLLTNSFLHPL), 189–209 (LTLATLAGTIFHIPMNFFLVS), 222–242 (AAASNLLVVIFLVAHVWIAGL), 270–290 (IGVCLEWWWYEIMTVLCGLLI), 300–320 (GILIQTTSLLYIFPSSLGLAV), 341–361 (IVAVSFAGVMGLTASAFAWGV), 368–388 (IFTNDVAIIKLTAAALPILGL), 415–437 (INLGAFYLVGTPVAVGLTFWAAY), and 441–463 (GLWVGLLAAQICCAAMMLYVVAT).

It belongs to the multi antimicrobial extrusion (MATE) (TC 2.A.66.1) family. As to expression, detected in the part of the veins in cotyledons of 6-day-old seedlings and the basal parts of the petioles in older plants. Highly expressed in the vascular tissues of hypocotyl in dark-grown seedlings.

It is found in the late endosome membrane. Its function is as follows. May act as a negative regulator of hypocotyl cell elongation in the light. This Arabidopsis thaliana (Mouse-ear cress) protein is Protein DETOXIFICATION 52.